The following is a 250-amino-acid chain: Ubiquinone biosynthesis O-methyltransferase (250 aa).

S-adenosyl-L-methionine is bound by residues R41, G72, D93, and M136.

This sequence belongs to the methyltransferase superfamily. UbiG/COQ3 family.

It catalyses the reaction a 3-demethylubiquinol + S-adenosyl-L-methionine = a ubiquinol + S-adenosyl-L-homocysteine + H(+). The enzyme catalyses a 3-(all-trans-polyprenyl)benzene-1,2-diol + S-adenosyl-L-methionine = a 2-methoxy-6-(all-trans-polyprenyl)phenol + S-adenosyl-L-homocysteine + H(+). It participates in cofactor biosynthesis; ubiquinone biosynthesis. In terms of biological role, O-methyltransferase that catalyzes the 2 O-methylation steps in the ubiquinone biosynthetic pathway. The sequence is that of Ubiquinone biosynthesis O-methyltransferase from Agrobacterium fabrum (strain C58 / ATCC 33970) (Agrobacterium tumefaciens (strain C58)).